The following is a 201-amino-acid chain: HTH-type transcriptional regulator Hpr (201 aa).

Positions 13-157 constitute an HTH marR-type domain; the sequence is AMLFSQRIAQ…MMCIIRNIYG (145 aa). The H-T-H motif DNA-binding region spans 63-86; that stretch reads ISEIAKFGVMHVSTAFNFSKKLEE.

Homodimer.

In terms of biological role, negative regulator of protease production and sporulation. This chain is HTH-type transcriptional regulator Hpr, found in Geobacillus sp. (strain WCH70).